Consider the following 289-residue polypeptide: MAASASSLALSSFNPKSLPFGVSRPASVSLLSPSLSFKLNSDSVSFSIAAKWNSPASRFARNVAITSEFEVEEDGFADVAPPKEQSFSADLKLFVGNLPFNVDSAQLAQLFESAGNVEMVEVIYDKITGRSRGFGFVTMSSVSEVEAAAQQFNGYELDGRPLRVNAGPPPPKREDGFSRGPRSSFGSSGSGYGGGGGSGAGSGNRVYVGNLSWGVDDMALESLFSEQGKVVEARVIYDRDSGRSKGFGFVTYDSSQEVQNAIKSLDGADLDGRQIRVSEAEARPPRRQY.

Residues 1 to 62 constitute a chloroplast transit peptide; the sequence is MAASASSLAL…NSPASRFARN (62 aa). A phosphoserine mark is found at S6 and S12. An N-acetylvaline modification is found at V63. An RRM 1 domain is found at 91-169; sequence LKLFVGNLPF…RPLRVNAGPP (79 aa). The interval 158–199 is disordered; the sequence is DGRPLRVNAGPPPPKREDGFSRGPRSSFGSSGSGYGGGGGSG. The interval 170-203 is linker (Gly-rich); that stretch reads PPKREDGFSRGPRSSFGSSGSGYGGGGGSGAGSG. Positions 178 to 187 are enriched in low complexity; it reads SRGPRSSFGS. The segment covering 188 to 199 has biased composition (gly residues); that stretch reads SGSGYGGGGGSG. Residues 204-282 form the RRM 2 domain; the sequence is NRVYVGNLSW…RQIRVSEAEA (79 aa).

In terms of processing, ADP-ribosylated by the Pseudomonas syringae type III effector HopU1. ADP-ribosylation reduces the ability of the protein to bind RNA. Post-translationally, phosphorylated on tyrosine residues after treatment with abscisic acid (ABA). Phosphorylation may reduce the ability of the protein to bind RNA.

It is found in the plastid. The protein localises to the chloroplast. Functionally, could be involved in splicing and/or processing of chloroplast RNA's. The protein is RNA-binding protein CP29B, chloroplastic of Arabidopsis thaliana (Mouse-ear cress).